The following is a 263-amino-acid chain: MVYLVHQNEWRSVWVKTLAKLNKNVLINISYHGTKFHGYAVQNDYETVQSKLQDALAWIYESKIYVNASGRTDKGVHAINQYISFYIDDRISLEKLREILNRYGQNKWYIKWIKEVDRNFHARFSAKAKTYLYLIDYCANNPLFYDHAWIVNFQLDFNLIEKAIPILEGTHNFWSFSTADKDKGLRTIHKIDLKQEDNKVYIYITGDGFLRSMVRMIVGALYNIGIKKYDLNHLKWLLDNPKKGRAITKAPASGLYLYEVYYE.

Aspartate 73 serves as the catalytic Nucleophile. Tyrosine 131 serves as a coordination point for substrate.

The protein belongs to the tRNA pseudouridine synthase TruA family. Homodimer.

The catalysed reaction is uridine(38/39/40) in tRNA = pseudouridine(38/39/40) in tRNA. In terms of biological role, formation of pseudouridine at positions 38, 39 and 40 in the anticodon stem and loop of transfer RNAs. The polypeptide is tRNA pseudouridine synthase A (Mycoplasmoides gallisepticum (strain R(low / passage 15 / clone 2)) (Mycoplasma gallisepticum)).